The following is a 284-amino-acid chain: Formyltetrahydrofolate deformylase (284 aa).

The ACT domain maps to 7-90; that stretch reads TLLVSCPDQP…QIHFSDQLPR (84 aa). D228 is a catalytic residue.

Belongs to the PurU family.

The catalysed reaction is (6R)-10-formyltetrahydrofolate + H2O = (6S)-5,6,7,8-tetrahydrofolate + formate + H(+). Its pathway is purine metabolism; IMP biosynthesis via de novo pathway; formate from 10-formyl-5,6,7,8-tetrahydrofolate: step 1/1. Its function is as follows. Catalyzes the hydrolysis of 10-formyltetrahydrofolate (formyl-FH4) to formate and tetrahydrofolate (FH4). This Synechocystis sp. (strain ATCC 27184 / PCC 6803 / Kazusa) protein is Formyltetrahydrofolate deformylase.